The chain runs to 555 residues: Disabled homolog 1 (555 aa).

Residues 1-26 (MSTETELQVAVKTSAKKDSRKKGQDR) are disordered. Over residues 15–26 (AKKDSRKKGQDR) the composition is skewed to basic and acidic residues. The PID domain maps to 36–189 (KGEGVRYKAK…CEQAVYQTIL (154 aa)). 3 positions are modified to phosphotyrosine: Tyr198, Tyr220, and Tyr232. Disordered regions lie at residues 386–409 (PLAT…PRQK) and 469–555 (LTPV…QDGS). Residues 391 to 403 (PGTNDSARSSPQS) are compositionally biased toward polar residues. Composition is skewed to low complexity over residues 470 to 479 (TPVTSTTPST) and 490 to 501 (SSPSKSSASHVS). Phosphoserine; by CDK5 is present on Ser491. Acidic residues predominate over residues 504-513 (TADDIFEEGF).

In terms of assembly, associates with the SH2 domains of SRC, FYN and ABL. Interacts (phosphorylated on tyrosine residues) with CRK and CRKL (via respective SH2 domain). Interacts with SIAH1, LRP8 and VLDLR. Interacts with LRP1. Interacts with APLP1 (via NPXY motif). Interacts with DAB2IP. Interacts with ZSWIM8. Post-translationally, phosphorylated by FYN on Tyr-198 and Tyr-220 upon reelin induction in embryonic neurons. Also phosphorylated on Ser-491 independently of reelin signaling. In terms of processing, ubiquitinated by various cullin-5-RING E3 ubiquitin-protein ligase complexes (ECS complexes) following ligand-binding and phosphorylation, leading to its degradation. Ubiquitinated by the ECS(SOCS7) complex in the cortical plate of the developing cerebral cortex following ligand-binding and phosphorylation by FYN, leading to its degradation by the proteasome. Recognized by ZSWIM8 through a disorder targets misorder mechanism that eliminates misfolded DAB1 via ubiquitination and proteasomal degradation.

It localises to the cytoplasm. In terms of biological role, signaling adapter of the reelin-mediated signaling pathway, which regulates the migration and differentiation of postmitotic neurons during brain development. Mediates intracellular transduction of Reelin signaling following reelin (RELN)-binding to its receptor: acts by docking proteins through its phosphotyrosine residues and PID domain. The chain is Disabled homolog 1 (Dab1) from Rattus norvegicus (Rat).